A 261-amino-acid polypeptide reads, in one-letter code: uncharacterized protein (261 aa).

Residues 20–34 (TMSTPFLESDNSNTQ) show a composition bias toward polar residues. The tract at residues 20-55 (TMSTPFLESDNSNTQSISGRIGSNNNSNSKNSGGIG) is disordered. The span at 35–51 (SISGRIGSNNNSNSKNS) shows a compositional bias: low complexity. Helical transmembrane passes span 113 to 133 (LFSG…ILLL), 183 to 200 (LIFW…ILFF), and 204 to 226 (IISL…MANV).

It belongs to the TVP23 family.

Its subcellular location is the membrane. This is an uncharacterized protein from Dictyostelium discoideum (Social amoeba).